Reading from the N-terminus, the 196-residue chain is Cilia- and flagella-associated protein 107 (196 aa).

2 mn regions span residues 47 to 62 and 97 to 109; these read TPQC…MPDH and ISTY…RHNY.

As to quaternary structure, microtubule inner protein component of sperm flagellar doublet microtubules.

Its subcellular location is the cytoplasm. It is found in the cytoskeleton. The protein localises to the cilium axoneme. It localises to the flagellum axoneme. Microtubule inner protein (MIP) part of the dynein-decorated doublet microtubules (DMTs) in cilia axoneme, which is required for motile cilia beating. This chain is Cilia- and flagella-associated protein 107, found in Mus musculus (Mouse).